We begin with the raw amino-acid sequence, 277 residues long: 2-dehydro-3-deoxyphosphooctonate aldolase (277 aa).

It belongs to the KdsA family.

The protein localises to the cytoplasm. The catalysed reaction is D-arabinose 5-phosphate + phosphoenolpyruvate + H2O = 3-deoxy-alpha-D-manno-2-octulosonate-8-phosphate + phosphate. It participates in carbohydrate biosynthesis; 3-deoxy-D-manno-octulosonate biosynthesis; 3-deoxy-D-manno-octulosonate from D-ribulose 5-phosphate: step 2/3. It functions in the pathway bacterial outer membrane biogenesis; lipopolysaccharide biosynthesis. This is 2-dehydro-3-deoxyphosphooctonate aldolase from Brucella anthropi (strain ATCC 49188 / DSM 6882 / CCUG 24695 / JCM 21032 / LMG 3331 / NBRC 15819 / NCTC 12168 / Alc 37) (Ochrobactrum anthropi).